The following is a 409-amino-acid chain: Phosphoserine phosphatase SerB2 (409 aa).

ACT domains follow at residues 8–86 (LITV…RSDD) and 102–174 (GRPI…DYGL). The Nucleophile role is filled by aspartate 185. Residues aspartate 185 and aspartate 187 each contribute to the Mg(2+) site. Aspartate 187 acts as the Proton donor in catalysis. Substrate-binding positions include glutamate 194, arginine 230, 273-274 (SG), and lysine 318. A Mg(2+)-binding site is contributed by aspartate 341. A substrate-binding site is contributed by asparagine 344.

This sequence belongs to the HAD-like hydrolase superfamily. SerB family. As to quaternary structure, homodimer. The dimeric population shifts to a tetramer in the presence of L-serine, which inactivates the enzyme. It depends on Mg(2+) as a cofactor. Mn(2+) is required as a cofactor.

The protein localises to the secreted. Its subcellular location is the host cytoplasm. It is found in the host cytosol. The catalysed reaction is O-phospho-L-serine + H2O = L-serine + phosphate. The enzyme catalyses O-phospho-D-serine + H2O = D-serine + phosphate. It catalyses the reaction O-phospho-L-seryl-[protein] + H2O = L-seryl-[protein] + phosphate. It carries out the reaction O-phospho-L-threonyl-[protein] + H2O = L-threonyl-[protein] + phosphate. The protein operates within amino-acid biosynthesis; L-serine biosynthesis; L-serine from 3-phospho-D-glycerate: step 3/3. Its activity is regulated as follows. Clofazimine, a drug being evaluated for XDR and MDR tuberculosis, inhibits SerB2 phosphatase activity and reverses the various functional effects described above and interactions with host proteins. Is inhibited by known PSP inhibitors such as chlorpromazine, DL-AP3 and sodium orthovanadate, but not by okadaic acid. By binding to the ACT domains, amino-acids have various effects on enzyme activity: L-serine and L-glycine act as inhibitors, whereas L-lysine, L-tyrosine and L-phenylalanine are activators. High throughput screen has been performed to identify specific PSP inhibitors with activity against intracellular bacteria; the two best hits identified in this screen, clorobiocin and rosaniline, are bactericidal and kill bacteria in infected macrophages in a dose-dependent manner. Catalyzes the dephosphorylation of O-phospho-L-serine into L-serine, a step in the L-serine biosynthetic pathway. Exhibits high specificity for L-phosphoserine compared to substrates like L-phosphothreonine (5% relative activity) and L-phosphotyrosine (1.7% relative activity). Its function is as follows. In the host, induces significant cytoskeleton rearrangements through cofilin dephosphorylation and its subsequent activation, and affects the expression of genes that regulate actin dynamics. It specifically interacts with HSP90, HSP70 and HSP27 that block apoptotic pathways but not with other HSPs. Also interacts with GAPDH. It actively dephosphorylates MAP kinase p38 and NF-kappa B p65 (specifically at Ser-536) that play crucial roles in inflammatory and immune responses. This in turn leads to down-regulation of Interleukin 8, a chemotactic and inflammatory cytokine. Thus might help the pathogen to evade the host's immune response. Exogenous addition of purified SerB2 protein to human THP-1 cells (that can be differentiated into macrophage-like cells) induces microtubule rearrangements; the phosphatase activity is co-related to the elicited rearrangements, while addition of the ACT-domains alone elicits no rearrangements. The chain is Phosphoserine phosphatase SerB2 from Mycobacterium tuberculosis (strain ATCC 25618 / H37Rv).